The primary structure comprises 181 residues: Protein Syd (181 aa).

Belongs to the Syd family.

Its subcellular location is the cell inner membrane. Its function is as follows. Interacts with the SecY protein in vivo. May bind preferentially to an uncomplexed state of SecY, thus functioning either as a chelating agent for excess SecY in the cell or as a regulatory factor that negatively controls the translocase function. This is Protein Syd from Escherichia coli (strain K12 / DH10B).